A 144-amino-acid chain; its full sequence is Ribonuclease H (144 aa).

The 136-residue stretch at 1 to 136 (MKIVTLFSDG…CDQMARNEAL (136 aa)) folds into the RNase H type-1 domain. 4 residues coordinate Mg(2+): D9, E47, D69, and D128.

Belongs to the RNase H family. Monomer. Requires Mg(2+) as cofactor.

It localises to the cytoplasm. The enzyme catalyses Endonucleolytic cleavage to 5'-phosphomonoester.. In terms of biological role, endonuclease that specifically degrades the RNA of RNA-DNA hybrids. The chain is Ribonuclease H from Campylobacter concisus (strain 13826).